Here is a 425-residue protein sequence, read N- to C-terminus: MEKLVVHGGFTLRGAVNISGSKNASLPILAASLLTDEPVVVRRVPDVSDTNFMVQIMGQLGASVERSSGNVRVEARNLHSEAAYEQVRKMRASICLMGPLMARMQRCVIPLPGGCVIGDRPVDLHIRAIQALGAQVQIERGNLIIEAPRGLKGATVDLSGDHGPTVLGTDNLMMAAVLAEGTTVIESAASEPEVVDLANFLTKMGANIQGAGTRRIVIEGVEKLRGCNHTVIPDRIEAGTFMVAAAMMGDGVTLRRVCEEHMTVVTDLLRKCGHHVEFNERGDTVTIIAGKTPKCGEIKTAPYPGYPTDMQAQMTALFATTPGISVVKDTIFPQRFMHCSELKRMGADIKVDNGTAVISGVETLSGAPVMASDLRASAALVLAALKAEGTTEIHRLYHIDRGYEMIDEKLLAIGAAVERLPDDDN.

Residue 22-23 participates in phosphoenolpyruvate binding; sequence KN. Arg91 is a UDP-N-acetyl-alpha-D-glucosamine binding site. Residue Cys115 is the Proton donor of the active site. Position 115 is a 2-(S-cysteinyl)pyruvic acid O-phosphothioketal (Cys115). Residues 120-124, Asp309, and Ile331 each bind UDP-N-acetyl-alpha-D-glucosamine; that span reads RPVDL.

This sequence belongs to the EPSP synthase family. MurA subfamily.

The protein localises to the cytoplasm. It carries out the reaction phosphoenolpyruvate + UDP-N-acetyl-alpha-D-glucosamine = UDP-N-acetyl-3-O-(1-carboxyvinyl)-alpha-D-glucosamine + phosphate. It functions in the pathway cell wall biogenesis; peptidoglycan biosynthesis. Functionally, cell wall formation. Adds enolpyruvyl to UDP-N-acetylglucosamine. The polypeptide is UDP-N-acetylglucosamine 1-carboxyvinyltransferase (Akkermansia muciniphila (strain ATCC BAA-835 / DSM 22959 / JCM 33894 / BCRC 81048 / CCUG 64013 / CIP 107961 / Muc)).